Reading from the N-terminus, the 185-residue chain is uncharacterized protein (185 aa).

Belongs to the EUO family.

This is an uncharacterized protein from Chlamydia muridarum (strain MoPn / Nigg).